A 146-amino-acid polypeptide reads, in one-letter code: Large ribosomal subunit protein uL15 (146 aa).

Basic and acidic residues predominate over residues methionine 1 to arginine 13. The disordered stretch occupies residues methionine 1–arginine 47. Residues arginine 21–alanine 31 show a composition bias toward gly residues.

The protein belongs to the universal ribosomal protein uL15 family. Part of the 50S ribosomal subunit.

In terms of biological role, binds to the 23S rRNA. In Clostridium kluyveri (strain NBRC 12016), this protein is Large ribosomal subunit protein uL15.